The chain runs to 86 residues: Putative defensin-like protein 189 (86 aa).

A signal peptide spans 1 to 28 (MKMAKSANEIGFITCLVVFLVLTGQSNG). 4 cysteine pairs are disulfide-bonded: Cys39–Cys85, Cys52–Cys71, Cys57–Cys80, and Cys61–Cys82.

It belongs to the DEFL family.

The protein resides in the secreted. This chain is Putative defensin-like protein 189, found in Arabidopsis thaliana (Mouse-ear cress).